Reading from the N-terminus, the 418-residue chain is Creatine kinase U-type, mitochondrial (418 aa).

A mitochondrion-targeting transit peptide spans 1 to 39; the sequence is MAGPFSRLLSARPGLRLLALAGAGSLTAGILLRPESVGA. A cardiolipin-binding region spans residues 40 to 64; that stretch reads AAAERRRLYPPSAEYPDLRKHNNCM. Residues 46–132 enclose the Phosphagen kinase N-terminal domain; sequence RLYPPSAEYP…FDPVIQERHN (87 aa). A Phosphoserine modification is found at Ser-152. In terms of domain architecture, Phosphagen kinase C-terminal spans 159-401; that stretch reads YVLSSRVRTG…NYLIDCERRL (243 aa). Position 162-166 (162-166) interacts with ATP; it reads SSRVR. A Phosphoserine modification is found at Ser-197. Thr-214 carries the post-translational modification Phosphothreonine. His-225 is a binding site for ATP. Ser-233 carries the phosphoserine modification. Residues Arg-270, Arg-326, and 354–359 each bind ATP; that span reads RGTGGV. Phosphothreonine is present on Thr-356. Residue Ser-366 is modified to Phosphoserine. ATP is bound at residue Asp-369.

It belongs to the ATP:guanido phosphotransferase family. In terms of assembly, exists as an octamer composed of four MTCK homodimers.

It is found in the mitochondrion inner membrane. The enzyme catalyses creatine + ATP = N-phosphocreatine + ADP + H(+). Functionally, reversibly catalyzes the transfer of phosphate between ATP and various phosphogens (e.g. creatine phosphate). Creatine kinase isoenzymes play a central role in energy transduction in tissues with large, fluctuating energy demands, such as skeletal muscle, heart, brain and spermatozoa. The chain is Creatine kinase U-type, mitochondrial (Ckmt1) from Mus musculus (Mouse).